A 426-amino-acid chain; its full sequence is Bone morphogenetic protein 7 (426 aa).

A signal peptide spans 1–22 (MNALTVKRRLPVLLFLFHISLS). Positions 23–282 (SISSNTILEN…TSDIHLRSVR (260 aa)) are excised as a propeptide. N-linked (GlcNAc...) asparagine glycosylation is found at Asn177, Asn307, and Asn367. 3 cysteine pairs are disulfide-bonded: Cys325–Cys391, Cys354–Cys423, and Cys358–Cys425.

Belongs to the TGF-beta family. As to quaternary structure, homodimer; disulfide-linked. Interacts with twsg1.

The protein resides in the secreted. Its function is as follows. Growth factor of the TGF-beta superfamily that plays important role in various biological processes, including embryogenesis, hematopoiesis, neurogenesis and skeletal morphogenesis. Initiates the canonical BMP signaling cascade by associating with type I receptor ACVR1 and type II receptor ACVR2A. Once all three components are bound together in a complex at the cell surface, ACVR2A phosphorylates and activates ACVR1. In turn, ACVR1 propagates signal by phosphorylating SMAD1/5/8 that travel to the nucleus and act as activators and repressors of transcription of target genes. The polypeptide is Bone morphogenetic protein 7 (bmp7) (Xenopus laevis (African clawed frog)).